The primary structure comprises 449 residues: Glucose-6-phosphate isomerase (449 aa).

Glutamate 291 serves as the catalytic Proton donor. Residues histidine 312 and lysine 426 contribute to the active site.

It belongs to the GPI family.

It localises to the cytoplasm. It catalyses the reaction alpha-D-glucose 6-phosphate = beta-D-fructose 6-phosphate. The protein operates within carbohydrate biosynthesis; gluconeogenesis. Its pathway is carbohydrate degradation; glycolysis; D-glyceraldehyde 3-phosphate and glycerone phosphate from D-glucose: step 2/4. Catalyzes the reversible isomerization of glucose-6-phosphate to fructose-6-phosphate. This is Glucose-6-phosphate isomerase from Streptococcus pneumoniae (strain CGSP14).